A 779-amino-acid polypeptide reads, in one-letter code: MENFFIVKKLASDTYGKALNVDLDRLLQAQNKYTLQELISYCSALTILHYDYSTLAARLSVYLLHQSTASSFSEAVSLQAAQSCSRLSPQFVDVVYKYKAIFDSYIDYSRDYKLTLLGIETMKNSYLLKNKDGVIMERPQDAYMRVAIMIYGMGRVVNMKMILLTYDLLSRHVITHASPTMFNAGTKKPQLSSCFLLNVNDNLENLYDMVKTAGIISGGGGGIGLCLSGIRAKNSFISGSGLRSNGIQNYIVLQNASQCYANQGGLRPGAYAVYLELWHQDIFTFLQMPRLKGQMAEQRLNAPNLKYGLWVPDLFMEILEDQIHDRGDGTWYLFSPDQAPNLHKVFDLERSRHKNAHREFRKLYYQYVAEKRYTGVTTAKEIIKEWFKTVIQVGNPYIGFKDAINRKSNLSHVGTITNSNLCIEITIPCWEGSEAEQGVCNLAAVNLAAFIRENSYDYRGLIEAAGNVTENLDNIIDNGYYPTEATRRSNMRHRPIGIGVFGLADVFASFKMKFGSPEAIAMDEAIHAALYYGAMRRSVELAKEKGSHPSFPGSAASKGLLQPDLWVRCDDLVFSWEERVAQTTQGVLTPKKWWQLRLAAMQGVRNGYLTALMPTATSSNSTGKNECFEPFTSNLYTRRTLSGEFIVLNKYLIDDLKEINLWTEAIQQQLLNAGGSIQHILDIPAEIRERYKTSREMNQKILTKHAAARNPFVSQSMSLNYYFYEPELSQVLTVLVLGWKKGLTTGSYYCHFSPGAGTQKKIIRNSEKACSADCEACLL.

Residues Ser-178, 193–194 (SC), Gly-222, 420–424 (NLCIE), and 614–618 (PTATS) contribute to the substrate site. A disulfide bridge connects residues Cys-194 and Cys-440. The active-site Proton acceptor is the Asn-420. Cys-422 functions as the Cysteine radical intermediate in the catalytic mechanism. The active-site Proton acceptor is the Glu-424.

It belongs to the ribonucleoside diphosphate reductase large chain family. Heterotetramer composed of a homodimer of the large subunit (R1) and a homodimer of the small subunit (R2). Larger multisubunit protein complex are also active, composed of (R1)n(R2)n.

It catalyses the reaction a 2'-deoxyribonucleoside 5'-diphosphate + [thioredoxin]-disulfide + H2O = a ribonucleoside 5'-diphosphate + [thioredoxin]-dithiol. Its activity is regulated as follows. Under complex allosteric control mediated by deoxynucleoside triphosphates and ATP binding. The type of nucleotide bound at the specificity site determines substrate preference. It seems probable that ATP makes the enzyme reduce CDP and UDP, dGTP favors ADP reduction and dTTP favors GDP reduction. In terms of biological role, ribonucleoside-diphosphate reductase holoenzyme provides the precursors necessary for viral DNA synthesis. Allows virus growth in non-dividing cells. Catalyzes the biosynthesis of deoxyribonucleotides from the corresponding ribonucleotides. The polypeptide is Ribonucleoside-diphosphate reductase large subunit (Ornithodoros (relapsing fever ticks)).